The chain runs to 169 residues: uncharacterized protein (169 aa).

Positions 35–163 (LIGRGTFILL…PYCPDSLQAL (129 aa)) constitute a Nudix hydrolase domain. The short motif at 81 to 103 (YADSAARELEEELGIRDAVLREH) is the Nudix box element. Residues Glu-88 and Glu-92 each coordinate Mg(2+).

It belongs to the Nudix hydrolase family. Mg(2+) is required as a cofactor.

This is an uncharacterized protein from Pseudomonas aeruginosa (strain ATCC 15692 / DSM 22644 / CIP 104116 / JCM 14847 / LMG 12228 / 1C / PRS 101 / PAO1).